We begin with the raw amino-acid sequence, 82 residues long: RNA-binding protein Hfq (82 aa).

Positions 11 to 71 (DTFLNHVRKT…ISTIMPGAPI (61 aa)) constitute a Sm domain.

The protein belongs to the Hfq family. As to quaternary structure, homohexamer.

Functionally, RNA chaperone that binds small regulatory RNA (sRNAs) and mRNAs to facilitate mRNA translational regulation in response to envelope stress, environmental stress and changes in metabolite concentrations. Also binds with high specificity to tRNAs. The protein is RNA-binding protein Hfq of Rhodopseudomonas palustris (strain HaA2).